The sequence spans 342 residues: Nucleoid-associated protein Spea_1765 (342 aa).

This sequence belongs to the YejK family.

The protein resides in the cytoplasm. Its subcellular location is the nucleoid. The protein is Nucleoid-associated protein Spea_1765 of Shewanella pealeana (strain ATCC 700345 / ANG-SQ1).